The sequence spans 560 residues: Tudor and KH domain-containing protein (560 aa).

KH domains follow at residues 52–115 and 124–190; these read DIEI…KAAI and PVFE…KHLI. Residues Lys65, Lys76, Lys110, Lys112, Lys152, Lys175, Lys181, Lys187, and Lys193 each participate in a glycyl lysine isopeptide (Lys-Gly) (interchain with G-Cter in ubiquitin) cross-link. The segment at 211 to 230 is disordered; the sequence is RVPRKQPISVRREEVTEPGG. Glycyl lysine isopeptide (Lys-Gly) (interchain with G-Cter in ubiquitin) cross-links involve residues Lys256 and Lys267. The segment at 268 to 291 is disordered; it reads EGSWEKPNDDSFQNSGAQSSPETS. Positions 277-290 are enriched in polar residues; the sequence is DSFQNSGAQSSPET. Ser278 carries the post-translational modification Phosphoserine. The 60-residue stretch at 353–412 folds into the Tudor domain; that stretch reads TVHVGDIVAAPLSTNGSWYRARVLGTLENGNLDLYFVDFGDNGDCALKDLRALRSDFLSL. Glycyl lysine isopeptide (Lys-Gly) (interchain with G-Cter in ubiquitin) cross-links involve residues Lys479, Lys510, and Lys529.

This sequence belongs to the Tdrkh family. As to quaternary structure, interacts with (symmetrically methylated) PIWIL1, PIWIL2 and PIWIL4. In terms of processing, ubiquitinated by PRKN during mitophagy, leading to its degradation and enhancement of mitophagy. Deubiquitinated by USP30. In terms of tissue distribution, highly expressed in testis, present at lower level in brain. Weakly or not expressed in other tissues (at protein level).

The protein localises to the cytoplasm. The protein resides in the mitochondrion. Functionally, participates in the primary piRNA biogenesis pathway and is required during spermatogenesis to repress transposable elements and prevent their mobilization, which is essential for the germline integrity. The piRNA metabolic process mediates the repression of transposable elements during meiosis by forming complexes composed of piRNAs and Piwi proteins and govern the methylation and subsequent repression of transposons. Required for the final steps of primary piRNA biogenesis by participating in the processing of 31-37 nt intermediates into mature piRNAs. May act in pi-bodies and piP-bodies by transferring piRNA precursors or intermediates to or between these granules. This is Tudor and KH domain-containing protein (Tdrkh) from Mus musculus (Mouse).